The following is a 565-amino-acid chain: Urocanate hydratase (565 aa).

NAD(+)-binding positions include 58–59 (GG), glutamine 136, 182–184 (GMG), glutamate 202, arginine 207, 245–246 (NA), 266–270 (QTSAH), 276–277 (YL), and tyrosine 325. Cysteine 413 is an active-site residue. Residue glycine 495 participates in NAD(+) binding.

It belongs to the urocanase family. The cofactor is NAD(+).

The protein localises to the cytoplasm. The enzyme catalyses 4-imidazolone-5-propanoate = trans-urocanate + H2O. It functions in the pathway amino-acid degradation; L-histidine degradation into L-glutamate; N-formimidoyl-L-glutamate from L-histidine: step 2/3. In terms of biological role, catalyzes the conversion of urocanate to 4-imidazolone-5-propionate. In Vibrio vulnificus (strain YJ016), this protein is Urocanate hydratase.